We begin with the raw amino-acid sequence, 222 residues long: MKNPPVCCVITRLPEAESLKKSEGAAFYELRLDLLGESWREAAAMLDKPFMATCRRSAEGGSFSGSEEERIGLLEKAAAAGAFMLDIEYSTPHLGEVLKRLRTQSKCLVSHHNFADTPSAGDLKTLVKDMLNYPADIYKVITTATSINDNIKLLNLIKEIPDKKIVAFAMGNLGILSRILCPLAGSPFTYASLNDSNQSASGQMTLAQMIEIYRSVNYENHT.

Residues E29–R31 and R55 contribute to the 3-dehydroquinate site. The Proton donor/acceptor role is filled by H112. The active-site Schiff-base intermediate with substrate is the K139. Positions 178, 199, and 203 each coordinate 3-dehydroquinate.

It belongs to the type-I 3-dehydroquinase family. In terms of assembly, homodimer.

It carries out the reaction 3-dehydroquinate = 3-dehydroshikimate + H2O. The protein operates within metabolic intermediate biosynthesis; chorismate biosynthesis; chorismate from D-erythrose 4-phosphate and phosphoenolpyruvate: step 3/7. Involved in the third step of the chorismate pathway, which leads to the biosynthesis of aromatic amino acids. Catalyzes the cis-dehydration of 3-dehydroquinate (DHQ) and introduces the first double bond of the aromatic ring to yield 3-dehydroshikimate. The protein is 3-dehydroquinate dehydratase of Dehalococcoides mccartyi (strain ATCC BAA-2266 / KCTC 15142 / 195) (Dehalococcoides ethenogenes (strain 195)).